The chain runs to 296 residues: Phosphoribosylaminoimidazole-succinocarboxamide synthase (296 aa).

Belongs to the SAICAR synthetase family.

The enzyme catalyses 5-amino-1-(5-phospho-D-ribosyl)imidazole-4-carboxylate + L-aspartate + ATP = (2S)-2-[5-amino-1-(5-phospho-beta-D-ribosyl)imidazole-4-carboxamido]succinate + ADP + phosphate + 2 H(+). It functions in the pathway purine metabolism; IMP biosynthesis via de novo pathway; 5-amino-1-(5-phospho-D-ribosyl)imidazole-4-carboxamide from 5-amino-1-(5-phospho-D-ribosyl)imidazole-4-carboxylate: step 1/2. This chain is Phosphoribosylaminoimidazole-succinocarboxamide synthase, found in Syntrophotalea carbinolica (strain DSM 2380 / NBRC 103641 / GraBd1) (Pelobacter carbinolicus).